A 1462-amino-acid polypeptide reads, in one-letter code: Gag-Pro-Pol polyprotein (1462 aa).

Gly-2 carries the N-myristoyl glycine; by host lipid modification. Residues 93–144 are disordered; sequence QIPSRPAPPPPSSPTHDPPDSDPQIPPPYVEPTAPQVLPVMHPHGAPPNHRP. Ser-105 carries the post-translational modification Phosphoserine; by host MAPK1. Positions 118-121 match the PPXY motif motif; it reads PPPY. Residues 124–127 carry the PTAP/PSAP motif motif; it reads PTAP. CCHC-type zinc fingers lie at residues 355–372 and 378–395; these read QPCF…DCTQ and GPCP…DCPR. In terms of domain architecture, Peptidase A2 spans 476-554; the sequence is IEALLDTGAD…NNWAIIGRDA (79 aa). Asp-481 serves as the catalytic For protease activity; shared with dimeric partner. The region spanning 614–804 is the Reverse transcriptase domain; the sequence is LEAGHIEPYT…GTIKFLGQII (191 aa). Mg(2+) contacts are provided by Asp-680, Asp-755, Asp-756, Asp-1040, Glu-1074, Asp-1096, Asp-1157, Asp-1230, and Asp-1287. The 135-residue stretch at 1031–1165 folds into the RNase H type-1 domain; the sequence is INTAPCLFSD…TDALLITPVL (135 aa). The Integrase catalytic domain maps to 1219-1388; that stretch reads RGLLPNHIWQ…QPIPETRSLS (170 aa). Positions 1393 to 1443 form a DNA-binding region, integrase-type; it reads HWYYFKLPGLNSRQWKGPQEALQEAAGAALIPVSASSAQWIPWRLLKRAAC.

As to quaternary structure, homodimer; the homodimers are part of the immature particles. Interacts with human TSG101 and NEDD4; these interactions are essential for budding and release of viral particles. Homodimer; further assembles as homohexamers. The cofactor is Mg(2+). Phosphorylation of the matrix protein p19 by MAPK1 seems to play a role in budding. In terms of processing, myristoylated. Myristoylation of the matrix (MA) domain mediates the transport and binding of Gag polyproteins to the host plasma membrane and is required for the assembly of viral particles. Post-translationally, specific enzymatic cleavages by the viral protease yield mature proteins. The polyprotein is cleaved during and after budding, this process is termed maturation. The protease is autoproteolytically processed at its N- and C-termini.

Its subcellular location is the virion. It catalyses the reaction Endonucleolytic cleavage to 5'-phosphomonoester.. It carries out the reaction DNA(n) + a 2'-deoxyribonucleoside 5'-triphosphate = DNA(n+1) + diphosphate. In terms of biological role, the matrix domain targets Gag, Gag-Pro and Gag-Pro-Pol polyproteins to the plasma membrane via a multipartite membrane binding signal, that includes its myristoylated N-terminus. Matrix protein. Its function is as follows. Forms the spherical core of the virus that encapsulates the genomic RNA-nucleocapsid complex. Functionally, binds strongly to viral nucleic acids and promote their aggregation. Also destabilizes the nucleic acids duplexes via highly structured zinc-binding motifs. In terms of biological role, the aspartyl protease mediates proteolytic cleavages of Gag and Gag-Pol polyproteins during or shortly after the release of the virion from the plasma membrane. Cleavages take place as an ordered, step-wise cascade to yield mature proteins. This process is called maturation. Displays maximal activity during the budding process just prior to particle release from the cell. Cleaves the translation initiation factor eIF4G leading to the inhibition of host cap-dependent translation. RT is a multifunctional enzyme that converts the viral RNA genome into dsDNA in the cytoplasm, shortly after virus entry into the cell. This enzyme displays a DNA polymerase activity that can copy either DNA or RNA templates, and a ribonuclease H (RNase H) activity that cleaves the RNA strand of RNA-DNA heteroduplexes in a partially processive 3' to 5'-endonucleasic mode. Conversion of viral genomic RNA into dsDNA requires many steps. A tRNA-Pro binds to the primer-binding site (PBS) situated at the 5'-end of the viral RNA. RT uses the 3' end of the tRNA primer to perform a short round of RNA-dependent minus-strand DNA synthesis. The reading proceeds through the U5 region and ends after the repeated (R) region which is present at both ends of viral RNA. The portion of the RNA-DNA heteroduplex is digested by the RNase H, resulting in a ssDNA product attached to the tRNA primer. This ssDNA/tRNA hybridizes with the identical R region situated at the 3' end of viral RNA. This template exchange, known as minus-strand DNA strong stop transfer, can be either intra- or intermolecular. RT uses the 3' end of this newly synthesized short ssDNA to perform the RNA-dependent minus-strand DNA synthesis of the whole template. RNase H digests the RNA template except for a polypurine tract (PPT) situated at the 5' end of the genome. It is not clear if both polymerase and RNase H activities are simultaneous. RNase H probably can proceed both in a polymerase-dependent (RNA cut into small fragments by the same RT performing DNA synthesis) and a polymerase-independent mode (cleavage of remaining RNA fragments by free RTs). Secondly, RT performs DNA-directed plus-strand DNA synthesis using the PPT that has not been removed by RNase H as primer. PPT and tRNA primers are then removed by RNase H. The 3' and 5' ssDNA PBS regions hybridize to form a circular dsDNA intermediate. Strand displacement synthesis by RT to the PBS and PPT ends produces a blunt ended, linear dsDNA copy of the viral genome that includes long terminal repeats (LTRs) at both ends. Its function is as follows. Catalyzes viral DNA integration into the host chromosome, by performing a series of DNA cutting and joining reactions. This is Gag-Pro-Pol polyprotein (gag-pro-pol) from Homo sapiens (Human).